The chain runs to 119 residues: UPF0102 protein Sare_1228 (119 aa).

This sequence belongs to the UPF0102 family.

This Salinispora arenicola (strain CNS-205) protein is UPF0102 protein Sare_1228.